Consider the following 457-residue polypeptide: MAVFARMVKGQVRHYSAPVDMAIPASKRKFIPSSGSYPKGFLVSGTHVGVKASNTKFPDLALISSETPCSAAAVFTTNKFQAAPVQVSRDILKTRQGHGIRSVVINSGCANAVTGKGGLEDAVAMGKKVDECNGLNEPSTLVMSTGVIGQRLPISKILNNIPAAHTNLSSTHDAWLSTARAICTTDTFPKLLSRTFTLPSSPERTYRLAGMTKGAGMIHPNMATLLGVLCTDAPVEPSALQSLLKYAVARSFNSISIDGDTSTNDTVAILANGAAGGAPVTSSAASPDYTALQDILTSFTQSLSQLVVRDGEGATKFVTVRVQNSPHYESARLIASTIARSPLVKTALYGRDANWGRILCAIGYTQGVAPGTVVPERTSVSFKPVDGSPILKLLVNGEPEQVDEERASVILQEEDLEIVVDLGGGEKGEQGLGGEEAVYWFCDFSHEYVTINGDYRT.

Substrate is bound by residues Thr-184, Lys-213, Thr-224, Glu-312, Asn-452, and Thr-457. The Nucleophile role is filled by Thr-224.

The protein belongs to the ArgJ family. As to quaternary structure, heterodimer of an alpha and a beta chain. The alpha and beta chains are autoproteolytically processed from a single precursor protein within the mitochondrion.

The protein resides in the mitochondrion matrix. The enzyme catalyses N(2)-acetyl-L-ornithine + L-glutamate = N-acetyl-L-glutamate + L-ornithine. The catalysed reaction is L-glutamate + acetyl-CoA = N-acetyl-L-glutamate + CoA + H(+). It participates in amino-acid biosynthesis; L-arginine biosynthesis; L-ornithine and N-acetyl-L-glutamate from L-glutamate and N(2)-acetyl-L-ornithine (cyclic): step 1/1. The protein operates within amino-acid biosynthesis; L-arginine biosynthesis; N(2)-acetyl-L-ornithine from L-glutamate: step 1/4. Catalyzes two activities which are involved in the cyclic version of arginine biosynthesis: the synthesis of acetylglutamate from glutamate and acetyl-CoA, and of ornithine by transacetylation between acetylornithine and glutamate. This chain is Arginine biosynthesis bifunctional protein ArgJ, mitochondrial, found in Aspergillus terreus (strain NIH 2624 / FGSC A1156).